The sequence spans 259 residues: Histidinol-phosphatase (259 aa).

Mg(2+)-binding residues include glutamate 66, aspartate 82, isoleucine 84, aspartate 85, and aspartate 207. Glutamate 66 provides a ligand contact to substrate. Residues 84–87 (IDGT) and aspartate 207 each bind substrate.

Belongs to the inositol monophosphatase superfamily. Requires Mg(2+) as cofactor.

The catalysed reaction is L-histidinol phosphate + H2O = L-histidinol + phosphate. It participates in amino-acid biosynthesis; L-histidine biosynthesis; L-histidine from 5-phospho-alpha-D-ribose 1-diphosphate: step 8/9. Catalyzes the dephosphorylation of histidinol-phosphate to histidinol, the direct precursor of histidine. This is Histidinol-phosphatase (hisN) from Chlorobaculum parvum (strain DSM 263 / NCIMB 8327) (Chlorobium vibrioforme subsp. thiosulfatophilum).